Reading from the N-terminus, the 619-residue chain is Chaperone protein HscA homolog (619 aa).

It belongs to the heat shock protein 70 family.

Functionally, chaperone involved in the maturation of iron-sulfur cluster-containing proteins. Has a low intrinsic ATPase activity which is markedly stimulated by HscB. The sequence is that of Chaperone protein HscA homolog from Haemophilus influenzae (strain PittGG).